The chain runs to 203 residues: Protein GrpE (203 aa).

Positions 1–20 are enriched in basic and acidic residues; sequence MSSKEQNVHEEQVSKEKEGM. Residues 1-38 are disordered; it reads MSSKEQNVHEEQVSKEKEGMESVMNESQEQVKSEDAQA.

The protein belongs to the GrpE family. Homodimer.

It localises to the cytoplasm. In terms of biological role, participates actively in the response to hyperosmotic and heat shock by preventing the aggregation of stress-denatured proteins, in association with DnaK and GrpE. It is the nucleotide exchange factor for DnaK and may function as a thermosensor. Unfolded proteins bind initially to DnaJ; upon interaction with the DnaJ-bound protein, DnaK hydrolyzes its bound ATP, resulting in the formation of a stable complex. GrpE releases ADP from DnaK; ATP binding to DnaK triggers the release of the substrate protein, thus completing the reaction cycle. Several rounds of ATP-dependent interactions between DnaJ, DnaK and GrpE are required for fully efficient folding. In Proteus mirabilis (strain HI4320), this protein is Protein GrpE.